The chain runs to 177 residues: Alpha-crystallin B chain (177 aa).

An N-acetylmethionine modification is found at Met-1. Residues 58–166 (RMPSWAQTGL…PERSVPISRD (109 aa)) enclose the sHSP domain. 5 residues coordinate Zn(2+): His-85, His-106, Glu-108, His-113, and His-121. Positions 155–169 (DVPERSVPISRDEKP) are enriched in basic and acidic residues. Positions 155–177 (DVPERSVPISRDEKPAVAGPQQK) are disordered.

Belongs to the small heat shock protein (HSP20) family. In terms of assembly, heteromer composed of three CRYAA and one CRYAB subunits. Aggregates with homologous proteins, including the small heat shock protein HSPB1, to form large heteromeric complexes. Inter-subunit bridging via zinc ions enhances stability, which is crucial as there is no protein turn over in the lens. Interacts with HSPBAP1 and TTN/titin.

May contribute to the transparency and refractive index of the lens. The chain is Alpha-crystallin B chain (CRYAB) from Squalus acanthias (Spiny dogfish).